The following is a 68-amino-acid chain: Large ribosomal subunit protein bL31 (68 aa).

C17, C19, C37, and C40 together coordinate Zn(2+).

The protein belongs to the bacterial ribosomal protein bL31 family. Type A subfamily. As to quaternary structure, part of the 50S ribosomal subunit. Zn(2+) serves as cofactor.

Its function is as follows. Binds the 23S rRNA. The sequence is that of Large ribosomal subunit protein bL31 from Dehalococcoides mccartyi (strain CBDB1).